Consider the following 396-residue polypeptide: NADH-quinone oxidoreductase subunit D (396 aa).

Belongs to the complex I 49 kDa subunit family. NDH-1 is composed of 14 different subunits. Subunits NuoB, C, D, E, F, and G constitute the peripheral sector of the complex.

The protein resides in the cell inner membrane. The enzyme catalyses a quinone + NADH + 5 H(+)(in) = a quinol + NAD(+) + 4 H(+)(out). In terms of biological role, NDH-1 shuttles electrons from NADH, via FMN and iron-sulfur (Fe-S) centers, to quinones in the respiratory chain. The immediate electron acceptor for the enzyme in this species is believed to be ubiquinone. Couples the redox reaction to proton translocation (for every two electrons transferred, four hydrogen ions are translocated across the cytoplasmic membrane), and thus conserves the redox energy in a proton gradient. In Bartonella quintana (strain Toulouse) (Rochalimaea quintana), this protein is NADH-quinone oxidoreductase subunit D.